We begin with the raw amino-acid sequence, 317 residues long: Melanocyte-stimulating hormone receptor (317 aa).

The Extracellular portion of the chain corresponds to 1–37; the sequence is MPVQGSQRRLLGSLNSTPTATPKLGLAANQTGAWCLE. Asparagine 29 is a glycosylation site (N-linked (GlcNAc...) asparagine). The helical transmembrane segment at 38 to 63 threads the bilayer; it reads VSIPDGLFLSLGLVSLVENVLVVAAI. Topologically, residues 64 to 72 are cytoplasmic; sequence AKNRNLHSP. A helical membrane pass occupies residues 73–93; it reads MYCFICCLALSDLLVSGSNML. The Extracellular segment spans residues 94-118; the sequence is ETAVILLLEAGALAARAAVVQQLDN. The chain crosses the membrane as a helical span at residues 119-140; it reads VIDVITCSSMLSSLCFLGAIAV. At 141–163 the chain is on the cytoplasmic side; the sequence is DRYISIFYALRYHSIVTLPRAQR. The chain crosses the membrane as a helical span at residues 164–183; sequence VVAAIWVASVLFSTLFIAYY. At 184 to 191 the chain is on the extracellular side; sequence DHAAVLLC. A helical transmembrane segment spans residues 192-211; sequence LVVFFLAMLVLMAVLYVHML. At 212 to 240 the chain is on the cytoplasmic side; that stretch reads ARACQHAQGIAQLHKRQRPAHQGFGLKGA. Residues 241 to 266 traverse the membrane as a helical segment; sequence ATLTILLGIFFLCWGPFFLHLTLIVL. The Extracellular segment spans residues 267–279; sequence CPQHPTCSCIFKN. The chain crosses the membrane as a helical span at residues 280–300; it reads FNLFLALIICNAIIDPLIYAF. Topologically, residues 301-317 are cytoplasmic; the sequence is RSQELRRTLKEVLLCSW. Cysteine 315 carries the S-palmitoyl cysteine lipid modification.

This sequence belongs to the G-protein coupled receptor 1 family. Interacts with MGRN1, but does not undergo MGRN1-mediated ubiquitination; this interaction competes with GNAS-binding and thus inhibits agonist-induced cAMP production. Interacts with OPN3; the interaction results in a decrease in MC1R-mediated cAMP signaling and ultimately a decrease in melanin production in melanocytes.

Its subcellular location is the cell membrane. Its function is as follows. Receptor for MSH (alpha, beta and gamma) and ACTH. The activity of this receptor is mediated by G proteins which activate adenylate cyclase. Mediates melanogenesis, the production of eumelanin (black/brown) and phaeomelanin (red/yellow), via regulation of cAMP signaling in melanocytes. The sequence is that of Melanocyte-stimulating hormone receptor (MC1R) from Colobus guereza (Mantled guereza).